A 231-amino-acid chain; its full sequence is Large ribosomal subunit protein uL1 (231 aa).

Belongs to the universal ribosomal protein uL1 family. As to quaternary structure, part of the 50S ribosomal subunit.

Its function is as follows. Binds directly to 23S rRNA. The L1 stalk is quite mobile in the ribosome, and is involved in E site tRNA release. Functionally, protein L1 is also a translational repressor protein, it controls the translation of the L11 operon by binding to its mRNA. This Ruthia magnifica subsp. Calyptogena magnifica protein is Large ribosomal subunit protein uL1.